A 145-amino-acid chain; its full sequence is Large ribosomal subunit protein uL24 (145 aa).

Disordered stretches follow at residues 1 to 21 (MKFN…HFNA) and 122 to 145 (KAKS…KMQE). Lys136 is covalently cross-linked (Glycyl lysine isopeptide (Lys-Gly) (interchain with G-Cter in SUMO2)). A Phosphothreonine modification is found at Thr139.

The protein belongs to the universal ribosomal protein uL24 family. Component of the large ribosomal subunit. Interacts with DHX33. Post-translationally, ufmylated by UFL1 in response to endoplasmic reticulum stress, promoting reticulophagy of endoplasmic reticulum sheets.

It is found in the cytoplasm. In terms of biological role, component of the large ribosomal subunit. The ribosome is a large ribonucleoprotein complex responsible for the synthesis of proteins in the cell. In Bos taurus (Bovine), this protein is Large ribosomal subunit protein uL24 (RPL26).